The following is a 304-amino-acid chain: Neurexophilin-4 (304 aa).

An N-terminal signal peptide occupies residues 1-23 (MRLLPEWLLLLFGPWLLRKVISG). The segment at 24-84 (QIVESGRPQY…GALARPGAAG (61 aa)) is II. N-linked (GlcNAc...) asparagine glycosylation is found at N72, N133, N143, and N149. The segment at 85 to 163 (GPPVPRTKRK…IVPPSKRVEF (79 aa)) is III. The interval 164–220 (GGVWLPGPAPHPLQSTLALEGVLPGLGPPLGMAGQGLGGNLGGALAGPLGGALGVPG) is IV (linker domain). The segment at 221–304 (AKESRAFNCH…NFQSEHPYFG (84 aa)) is v (Cys-rich).

This sequence belongs to the neurexophilin family. Post-translationally, may be proteolytically processed in neuron-like cells. As to expression, brain and kidney.

The protein resides in the secreted. Its function is as follows. May be signaling molecules that resemble neuropeptides and that act by binding to alpha-neurexins and possibly other receptors. This is Neurexophilin-4 (Nxph4) from Rattus norvegicus (Rat).